The sequence spans 518 residues: Serine/threonine-protein kinase UL13 (518 aa).

Disordered stretches follow at residues 1–22 (MDES…PQGA) and 39–120 (SRRA…PSPP). The span at 44-61 (GRPSGPSPRDGAVSGARP) shows a compositional bias: low complexity. Residues 151 to 518 (PGARSFGGSG…ANPAARHSLS (368 aa)) form the Protein kinase domain. ATP contacts are provided by residues 157-165 (GGSGGYGEV) and Lys176. Residue Asp277 is the Proton acceptor of the active site.

The protein belongs to the protein kinase superfamily. Ser/Thr protein kinase family. Autophosphorylated.

It is found in the virion tegument. The protein resides in the host nucleus. It catalyses the reaction L-seryl-[protein] + ATP = O-phospho-L-seryl-[protein] + ADP + H(+). It carries out the reaction L-threonyl-[protein] + ATP = O-phospho-L-threonyl-[protein] + ADP + H(+). Functionally, multifunctional serine/threonine kinase that plays a role in several processes including egress of virus particles from the nucleus, modulation of the actin cytoskeleton and regulation of viral and cellular gene expression. Regulates the nuclear localization of viral envelopment factors UL34 and UL31, by phosphorylating the US3 kinase, indicating a role in nuclear egress. Disrupts host nuclear lamins, including LMNA and LMNB1. Phosphorylates the viral Fc receptor composed of glycoproteins E (gE) and I (gI). Phosphorylation of glycoprotein E (gE) by UL13 alters its subcellular localization, from the host early endosome to the plasma membrane. Participates in the transcriptional regulation of cellular and viral mRNAs mainly by phosphorylating the viral transcriptional regulator ICP22. Additional substrates have been identified, including UL41, UL49 or host EF1D. The polypeptide is Serine/threonine-protein kinase UL13 (Homo sapiens (Human)).